The chain runs to 1215 residues: Homeodomain-interacting protein kinase 3 (1215 aa).

A Glycyl lysine isopeptide (Lys-Gly) (interchain with G-Cter in SUMO2) cross-link involves residue Lys-27. Residues Tyr-197–Val-525 form the Protein kinase domain. Residues Leu-203 to Val-211 and Lys-226 contribute to the ATP site. Asp-322 functions as the Proton acceptor in the catalytic mechanism. A Phosphotyrosine modification is found at Tyr-359. Residues Gln-767 to Ser-944 are interaction with AR. Residues Asn-796 to Lys-891 form an interaction with FAS region. Residues Gln-855–Met-1011 are required for localization to nuclear speckles. The segment at Ala-866–Leu-918 is SUMO interaction motifs (SIM); required for nuclear localization and kinase activity. The tract at residues Ile-870–Glu-880 is interaction with UBL1. Over residues Ser-912–Ser-929 the composition is skewed to low complexity. The tract at residues Ser-912–Thr-987 is disordered. A compositionally biased stretch (polar residues) spans Ser-945 to Ser-957. A Glycyl lysine isopeptide (Lys-Gly) (interchain with G-Cter in SUMO) cross-link involves residue Lys-1208.

It belongs to the protein kinase superfamily. CMGC Ser/Thr protein kinase family. HIPK subfamily. In terms of assembly, interacts with Nkx1-2. Interacts with FAS and DAXX. Probably part of a complex consisting of HIPK3, FAS and FADD. Interacts with and stabilizes ligand-bound androgen receptor (AR). Interacts with UBL1/SUMO-1. Binds to NR5A1/SF1, SPEN/MINT and RUNX2. In terms of processing, autophosphorylated, but autophosphorylation is not required for catalytic activity. May be sumoylated. In terms of tissue distribution, overexpressed in multidrug resistant cells. Highly expressed in heart and skeletal muscle, and at lower levels in placenta, pancreas, brain, spleen, prostate, thymus, testis, small intestine, colon and leukocytes. Not found in liver and lung.

Its subcellular location is the cytoplasm. The protein localises to the nucleus. It catalyses the reaction L-seryl-[protein] + ATP = O-phospho-L-seryl-[protein] + ADP + H(+). The enzyme catalyses L-threonyl-[protein] + ATP = O-phospho-L-threonyl-[protein] + ADP + H(+). In terms of biological role, serine/threonine-protein kinase involved in transcription regulation, apoptosis and steroidogenic gene expression. Phosphorylates JUN and RUNX2. Seems to negatively regulate apoptosis by promoting FADD phosphorylation. Enhances androgen receptor-mediated transcription. May act as a transcriptional corepressor for NK homeodomain transcription factors. The phosphorylation of NR5A1 activates SF1 leading to increased steroidogenic gene expression upon cAMP signaling pathway stimulation. In osteoblasts, supports transcription activation: phosphorylates RUNX2 that synergizes with SPEN/MINT to enhance FGFR2-mediated activation of the osteocalcin FGF-responsive element (OCFRE). This is Homeodomain-interacting protein kinase 3 (HIPK3) from Homo sapiens (Human).